The primary structure comprises 314 residues: Acetyl-coenzyme A carboxylase carboxyl transferase subunit alpha (314 aa).

The CoA carboxyltransferase C-terminal domain occupies 32-289; it reads EIDMLEASLK…KKMFLKHLNE (258 aa).

This sequence belongs to the AccA family. As to quaternary structure, acetyl-CoA carboxylase is a heterohexamer composed of biotin carboxyl carrier protein (AccB), biotin carboxylase (AccC) and two subunits each of ACCase subunit alpha (AccA) and ACCase subunit beta (AccD).

It is found in the cytoplasm. The enzyme catalyses N(6)-carboxybiotinyl-L-lysyl-[protein] + acetyl-CoA = N(6)-biotinyl-L-lysyl-[protein] + malonyl-CoA. Its pathway is lipid metabolism; malonyl-CoA biosynthesis; malonyl-CoA from acetyl-CoA: step 1/1. In terms of biological role, component of the acetyl coenzyme A carboxylase (ACC) complex. First, biotin carboxylase catalyzes the carboxylation of biotin on its carrier protein (BCCP) and then the CO(2) group is transferred by the carboxyltransferase to acetyl-CoA to form malonyl-CoA. The protein is Acetyl-coenzyme A carboxylase carboxyl transferase subunit alpha of Staphylococcus epidermidis (strain ATCC 12228 / FDA PCI 1200).